The following is a 496-amino-acid chain: Cobyric acid synthase (496 aa).

The GATase cobBQ-type domain occupies 258–427 (TLTVAAIRLP…WHGLLDNDAL (170 aa)). The active-site Nucleophile is Cys-339. Residue His-419 is part of the active site.

Belongs to the CobB/CobQ family. CobQ subfamily.

Its pathway is cofactor biosynthesis; adenosylcobalamin biosynthesis. In terms of biological role, catalyzes amidations at positions B, D, E, and G on adenosylcobyrinic A,C-diamide. NH(2) groups are provided by glutamine, and one molecule of ATP is hydrogenolyzed for each amidation. The sequence is that of Cobyric acid synthase from Mycolicibacterium smegmatis (strain ATCC 700084 / mc(2)155) (Mycobacterium smegmatis).